The sequence spans 87 residues: Small ribosomal subunit protein bS20 (87 aa).

A disordered region spans residues M1–M27.

The protein belongs to the bacterial ribosomal protein bS20 family.

Binds directly to 16S ribosomal RNA. The protein is Small ribosomal subunit protein bS20 of Aeromonas hydrophila subsp. hydrophila (strain ATCC 7966 / DSM 30187 / BCRC 13018 / CCUG 14551 / JCM 1027 / KCTC 2358 / NCIMB 9240 / NCTC 8049).